The chain runs to 614 residues: Baeyer-Villiger monooxygenase peniC (614 aa).

Residues Glu-99, Thr-107–Trp-110, Asp-119, and Tyr-125 contribute to the FAD site. NADP(+) is bound by residues Thr-255–Gln-261, Arg-278–Thr-279, and Lys-398–Arg-399.

This sequence belongs to the FAD-binding monooxygenase family. Requires FAD as cofactor.

It catalyses the reaction gamma-lactone-2-keto[5.5.5.5]fenestrane + NADPH + O2 + H(+) = penifulvin A + NADP(+) + H2O. The protein operates within secondary metabolite biosynthesis; terpenoid biosynthesis. Baeyer-Villiger monooxygenase; part of the gene cluster that mediates the biosynthesis of penifulvin A, a potent insecticidal sesquiterpene that features a [5.5.5.6]dioxafenestrane ring. Within the pathway, peniC is responsible for the final regioselective Baeyer-Villiger oxidation of gamma-lactone-2-keto[5.5.5.5]fenestran between C1 and C2 to form the delta-lactone moiety of penifulvin A. The first step of the pathway is performed by the sesquiterpene cyclase peniA that generates the angular triquinane scaffold silphinene via cyclization of the linear farnesyl pyrophosphate (FPP). The cytochrome P450 monooxygenase peniB and the flavin-dependent monooxygenase peniC then catalyze a series of oxidation reactions to transform silphinene into penifulvin A. The sequence is that of Baeyer-Villiger monooxygenase peniC from Penicillium patulum (Penicillium griseofulvum).